The chain runs to 167 residues: Insertion element IS1 protein InsB (167 aa).

The protein belongs to the transposase 27 family.

Absolutely required for transposition of IS1. The sequence is that of Insertion element IS1 protein InsB (insB) from Escherichia coli.